We begin with the raw amino-acid sequence, 1113 residues long: MKKSVRPAASKVSGERGKPEVAGNAAAGKPASKSSTAAPLSKVKSSDDLLAAMAGGNPASCNAVSKSKRTTSVGTTASTLDSKPKTASGTTSKRLASSLSKETNLTRDRLRTSRASANKKQSAAGPVGGDAASGKRSRGQTLAESEGRMSKSKSDGQISDKVALETKVKDLLGLAKSKDVEILHLRSELRDMRAQLGLGGEEPQEGAVEEEKPHVSAITAADVESTLILLQEQNQAIREELNLLKSENRMLKDRLNALGFSLEQRLDGSDKLFSYASLSPDLAAGSGQSDGGGTGTLASSVEGSAPGSLEDLLTGHQHGGSADNLDSESSEVYQAVTSSDDALDAPSGASSSSESECAPSRERSRRGSSGNASEVSVACLTERIHQMEENQHSTAEELQATLQELADLQQITQELNGENERLGEEKVILMDSLCQQSDKLELYGRQIEYLRSLLDEHHVSYVLEEDIKSGRYMELEQRYADLAENGRFEREQLLGVQQHLSNTLKMAEQDNAEAQEMIGALKERNHQMERIMESERQGRAAVEATLEEYKEVASSDQAELSRCRAQLEQERQRVAELYSLHTAGDKNDICQLLEGVRLGKEEAEAKAAKLQEGLEQAHGELSHLRETFSKLDREYREFQEQAQQQMGEQERALEKQRLDLQEKETEVADMKETIFELEDEVEQHRALKLHDNLIITDLENSVKKLQDQKHDMEREIKILHRRLREESMEWRQFQADLQTAVVIANDIKSEAQEEIGDLRRRLQEAQEKNEKLSKELEEVKSRKQDEERGRVYNYMNAVERDLAALRQGMGLSRRSSTSSEPSPTVKTLIKSFDSASQGPPSSGASVTPTASAAPLPRTPLSPSPMKTPPAAAVSPIQRHSVSGSMSAAKPLSSLGDKRPTYPDISLPAEHLLRGSAAGRPPSALQRVSNMDSTKAISVSRRSSEEMKRDMAAPDGASSASLMAMSAASSPLALASSSPTASVTPTTRSRLREERKDPLSALAREYGGSKRNALLKWCQKKTEGYQNIDITNFSSSWNDGLAFCAVLHTYLPAHIPYQELTSQEKRRNFTLAFQAAESVGIKCTLDINEMVHTERPDWQSVMTYVTAIYKYFET.

The disordered stretch occupies residues 1–160 (MKKSVRPAAS…KSKSDGQISD (160 aa)). Positions 59–103 (ASCNAVSKSKRTTSVGTTASTLDSKPKTASGTTSKRLASSLSKET) are enriched in polar residues. A compositionally biased stretch (basic and acidic residues) spans 145–154 (SEGRMSKSKS). Residues 220–259 (AADVESTLILLQEQNQAIREELNLLKSENRMLKDRLNALG) are a coiled coil. The interval 284–374 (AGSGQSDGGG…RRGSSGNASE (91 aa)) is disordered. Over residues 338 to 358 (SSDDALDAPSGASSSSESECA) the composition is skewed to low complexity. Coiled-coil stretches lie at residues 379-433 (CLTE…MDSL) and 473-791 (MELE…RGRV). Disordered regions lie at residues 766–785 (QEKNEKLSKELEEVKSRKQD), 832–902 (FDSA…PTYP), 914–957 (GSAA…DGAS), and 972–997 (ALASSSPTASVTPTTRSRLREERKDP). Residues 834–845 (SASQGPPSSGAS) show a composition bias toward low complexity. The span at 856–867 (PRTPLSPSPMKT) shows a compositional bias: pro residues. The span at 925-940 (QRVSNMDSTKAISVSR) shows a compositional bias: polar residues. Basic and acidic residues predominate over residues 941-951 (RSSEEMKRDMA). Residues 972–981 (ALASSSPTAS) show a composition bias toward low complexity. Residues 1007-1112 (GSKRNALLKW…YVTAIYKYFE (106 aa)) form the Calponin-homology (CH) domain.

This sequence belongs to the cytospin-A family. May interact with both microtubules and actin cytoskeleton.

The protein localises to the cytoplasm. The protein resides in the cytoskeleton. Its subcellular location is the spindle. It is found in the cell junction. It localises to the gap junction. In terms of biological role, involved in cytokinesis and spindle organization. May play a role in actin cytoskeleton organization and microtubule stabilization and hence required for proper cell adhesion and migration. The sequence is that of Cytospin-A (specc1l) from Tetraodon nigroviridis (Spotted green pufferfish).